Reading from the N-terminus, the 292-residue chain is 2-(5''-triphosphoribosyl)-3'-dephosphocoenzyme-A synthase (292 aa).

This sequence belongs to the CitG/MdcB family.

It carries out the reaction 3'-dephospho-CoA + ATP = 2'-(5''-triphospho-alpha-D-ribosyl)-3'-dephospho-CoA + adenine. Its function is as follows. Catalyzes the formation of 2-(5''-triphosphoribosyl)-3'-dephosphocoenzyme-A, the precursor of the prosthetic group of the holo-acyl carrier protein (gamma chain) of citrate lyase, from ATP and dephospho-CoA. This Escherichia coli O6:K15:H31 (strain 536 / UPEC) protein is 2-(5''-triphosphoribosyl)-3'-dephosphocoenzyme-A synthase.